The chain runs to 209 residues: COP9 signalosome complex subunit 8 (209 aa).

A PCI domain is found at 8 to 179; the sequence is ESAFSFKKLL…GALDVSFNKF (172 aa). At Ser-175 the chain carries Phosphoserine.

The protein belongs to the CSN8 family. As to quaternary structure, component of the CSN complex, composed of COPS1/GPS1, COPS2, COPS3, COPS4, COPS5, COPS6, COPS7 (COPS7A or COPS7B), COPS8 and COPS9. In the complex, it probably interacts directly with COPS3, COPS4 and COPS7 (COPS7A or COPS7B).

Its subcellular location is the cytoplasm. It is found in the nucleus. In terms of biological role, component of the COP9 signalosome complex (CSN), a complex involved in various cellular and developmental processes. The CSN complex is an essential regulator of the ubiquitin (Ubl) conjugation pathway by mediating the deneddylation of the cullin subunits of SCF-type E3 ligase complexes, leading to decrease the Ubl ligase activity of SCF-type complexes such as SCF, CSA or DDB2. The complex is also involved in phosphorylation of p53/TP53, c-jun/JUN, IkappaBalpha/NFKBIA, ITPK1 and IRF8/ICSBP, possibly via its association with CK2 and PKD kinases. CSN-dependent phosphorylation of TP53 and JUN promotes and protects degradation by the Ubl system, respectively. In Pongo abelii (Sumatran orangutan), this protein is COP9 signalosome complex subunit 8 (COPS8).